Reading from the N-terminus, the 365-residue chain is IgG receptor FcRn large subunit p51 (365 aa).

The first 23 residues, 1–23, serve as a signal peptide directing secretion; the sequence is MGVPRPQPWALGLLLFLLPGSLG. The interval 24–110 is alpha-1; it reads AESHLSLLYH…AFKALGGKGP (87 aa). Over 24-297 the chain is Extracellular; the sequence is AESHLSLLYH…VELESPAKSS (274 aa). The segment at 111–200 is alpha-2; that stretch reads YTLQGLLGCE…ERGRGNLEWK (90 aa). Cystine bridges form between Cys119/Cys182 and Cys221/Cys275. A glycan (N-linked (GlcNAc...) asparagine) is linked at Asn125. The tract at residues 201-290 is alpha-3; the sequence is EPPSMRLKAR…GLAQPLRVEL (90 aa). The Ig-like C1-type domain occupies 202-289; sequence PPSMRLKARP…AGLAQPLRVE (88 aa). The tract at residues 291–297 is connecting peptide; it reads ESPAKSS. A helical transmembrane segment spans residues 298–321; that stretch reads VLVVGIVIGVLLLTAAAVGGALLW. The Cytoplasmic portion of the chain corresponds to 322–365; that stretch reads RRMRSGLPAPWISLRGDDTGVLLPTPGEAQDADLKDVNVIPATA. Ser334 carries the phosphoserine modification.

This sequence belongs to the immunoglobulin superfamily. In terms of assembly, fcRn complex consists of two subunits: p51, and p14 which is equivalent to beta-2-microglobulin. It forms an MHC class I-like heterodimer. Interacts with albumin/ALB; this interaction regulates ALB homeostasis. As to quaternary structure, (Microbial infection) Interacts with Echovirus 6, Echovirus 11 and Echovirus 30 capsid protein VP1. In terms of tissue distribution, expressed in full-term placenta, heart, lung, liver, muscle, kidney, pancreas, and both fetal and adult small intestine.

The protein resides in the cell membrane. The protein localises to the endosome membrane. Its function is as follows. Cell surface receptor that transfers passive humoral immunity from the mother to the newborn. Binds to the Fc region of monomeric immunoglobulin gamma and mediates its selective uptake from milk. IgG in the milk is bound at the apical surface of the intestinal epithelium. The resultant FcRn-IgG complexes are transcytosed across the intestinal epithelium and IgG is released from FcRn into blood or tissue fluids. Throughout life, contributes to effective humoral immunity by recycling IgG and extending its half-life in the circulation. Mechanistically, monomeric IgG binding to FcRn in acidic endosomes of endothelial and hematopoietic cells recycles IgG to the cell surface where it is released into the circulation. In addition of IgG, regulates homeostasis of the other most abundant circulating protein albumin/ALB. In terms of biological role, (Microbial infection) Acts as an uncoating receptor for a panel of echoviruses including Echovirus 5, 6, 7, 9, 11, 13, 25 and 29. The protein is IgG receptor FcRn large subunit p51 (FCGRT) of Homo sapiens (Human).